The sequence spans 152 residues: Xanthine-guanine phosphoribosyltransferase (152 aa).

5-phospho-alpha-D-ribose 1-diphosphate-binding positions include 37-38 (RG), Arg-69, and 88-96 (DDLVDTGGT). A GMP-binding site is contributed by Arg-69. Mg(2+) is bound at residue Asp-89. Guanine is bound by residues Asp-92 and Ile-135. Xanthine-binding residues include Asp-92 and Ile-135. Residues 92–96 (DTGGT) and 134–135 (WI) contribute to the GMP site.

The protein belongs to the purine/pyrimidine phosphoribosyltransferase family. XGPT subfamily. In terms of assembly, homotetramer. Mg(2+) serves as cofactor.

Its subcellular location is the cell inner membrane. It carries out the reaction GMP + diphosphate = guanine + 5-phospho-alpha-D-ribose 1-diphosphate. It catalyses the reaction XMP + diphosphate = xanthine + 5-phospho-alpha-D-ribose 1-diphosphate. The enzyme catalyses IMP + diphosphate = hypoxanthine + 5-phospho-alpha-D-ribose 1-diphosphate. Its pathway is purine metabolism; GMP biosynthesis via salvage pathway; GMP from guanine: step 1/1. It functions in the pathway purine metabolism; XMP biosynthesis via salvage pathway; XMP from xanthine: step 1/1. Functionally, purine salvage pathway enzyme that catalyzes the transfer of the ribosyl-5-phosphate group from 5-phospho-alpha-D-ribose 1-diphosphate (PRPP) to the N9 position of the 6-oxopurines guanine and xanthine to form the corresponding ribonucleotides GMP (guanosine 5'-monophosphate) and XMP (xanthosine 5'-monophosphate), with the release of PPi. To a lesser extent, also acts on hypoxanthine. The sequence is that of Xanthine-guanine phosphoribosyltransferase from Edwardsiella ictaluri (strain 93-146).